A 692-amino-acid chain; its full sequence is Penicillin-binding protein activator LpoA (692 aa).

A signal peptide spans 1–26; that stretch reads MLSSITVRTKSGRLIPLVLAATLLAA. The N-palmitoyl cysteine moiety is linked to residue cysteine 27. The S-diacylglycerol cysteine moiety is linked to residue cysteine 27. Disordered regions lie at residues 297-316 and 324-373; these read AAAATDNGAPASSGTLAAAT and VNAA…PDAH. Residues 332-363 show a composition bias toward low complexity; that stretch reads PSAQGTDAAAPAAPNDSAALPPLDAAGDPIAP.

The protein belongs to the LpoA family. Interacts with PBP1a.

The protein resides in the cell outer membrane. Its function is as follows. Regulator of peptidoglycan synthesis that is essential for the function of penicillin-binding protein 1A (PBP1a). This chain is Penicillin-binding protein activator LpoA, found in Edwardsiella piscicida.